Consider the following 336-residue polypeptide: Small ribosomal subunit protein uS9m (336 aa).

Residues 32 to 81 (STTTTTTTTTTTTTSDEIPTTKPRFQSRFRRNQQPHQQQRSPYTSSQVTE) are disordered. A compositionally biased stretch (low complexity) spans 33-45 (TTTTTTTTTTTTT). The segment covering 65–81 (QPHQQQRSPYTSSQVTE) has biased composition (polar residues).

It belongs to the universal ribosomal protein uS9 family. Component of the mitochondrial small ribosomal subunit (mt-SSU).

Its subcellular location is the mitochondrion. In terms of biological role, component of the mitochondrial ribosome (mitoribosome), a dedicated translation machinery responsible for the synthesis of mitochondrial genome-encoded proteins, including at least some of the essential transmembrane subunits of the mitochondrial respiratory chain. The mitoribosomes are attached to the mitochondrial inner membrane and translation products are cotranslationally integrated into the membrane. This chain is Small ribosomal subunit protein uS9m (MRPS9), found in Candida albicans (strain SC5314 / ATCC MYA-2876) (Yeast).